Here is a 382-residue protein sequence, read N- to C-terminus: Galactokinase (382 aa).

34 to 37 (EHTD) is a binding site for substrate. 124-130 (GAGLSSS) is an ATP binding site. Mg(2+) is bound by residues serine 130 and glutamate 162. Aspartate 174 acts as the Proton acceptor in catalysis. Substrate is bound at residue tyrosine 223.

This sequence belongs to the GHMP kinase family. GalK subfamily.

The protein localises to the cytoplasm. The catalysed reaction is alpha-D-galactose + ATP = alpha-D-galactose 1-phosphate + ADP + H(+). It functions in the pathway carbohydrate metabolism; galactose metabolism. In terms of biological role, catalyzes the transfer of the gamma-phosphate of ATP to D-galactose to form alpha-D-galactose-1-phosphate (Gal-1-P). This Escherichia coli O157:H7 (strain EC4115 / EHEC) protein is Galactokinase.